The following is a 110-amino-acid chain: Multidrug transporter PA4990 (110 aa).

The next 4 membrane-spanning stretches (helical) occupy residues 7–27 (LAIAIAAEVVATTSLKAVAGF), 31–51 (LPLLLVVGGYVLAFSMLVLVM), 58–78 (VVYAIWSGLGIVLVSLVAMFV), and 85–105 (PAALLGIGLIIAGVLVIQLFS).

Belongs to the drug/metabolite transporter (DMT) superfamily. Small multidrug resistance (SMR) (TC 2.A.7.1) family.

The protein resides in the cell membrane. In terms of biological role, confers resistance to ethidium bromide, acriflavine and methyl viologen. In Pseudomonas aeruginosa (strain ATCC 15692 / DSM 22644 / CIP 104116 / JCM 14847 / LMG 12228 / 1C / PRS 101 / PAO1), this protein is Multidrug transporter PA4990.